The chain runs to 315 residues: Homoserine kinase (315 aa).

97–107 (PPARGLGSSAT) is a binding site for ATP.

Belongs to the GHMP kinase family. Homoserine kinase subfamily.

The protein resides in the cytoplasm. The catalysed reaction is L-homoserine + ATP = O-phospho-L-homoserine + ADP + H(+). The protein operates within amino-acid biosynthesis; L-threonine biosynthesis; L-threonine from L-aspartate: step 4/5. Catalyzes the ATP-dependent phosphorylation of L-homoserine to L-homoserine phosphate. This is Homoserine kinase from Prochlorococcus marinus (strain NATL1A).